Reading from the N-terminus, the 348-residue chain is Flagellar P-ring protein (348 aa).

The signal sequence occupies residues 1 to 16 (MRIFLLCLALSLSVFA).

The protein belongs to the FlgI family. As to quaternary structure, the basal body constitutes a major portion of the flagellar organelle and consists of four rings (L,P,S, and M) mounted on a central rod.

It localises to the periplasm. Its subcellular location is the bacterial flagellum basal body. Its function is as follows. Assembles around the rod to form the L-ring and probably protects the motor/basal body from shearing forces during rotation. This Campylobacter lari (strain RM2100 / D67 / ATCC BAA-1060) protein is Flagellar P-ring protein.